The primary structure comprises 181 residues: ATP synthase subunit delta (181 aa).

The protein belongs to the ATPase delta chain family. In terms of assembly, F-type ATPases have 2 components, F(1) - the catalytic core - and F(0) - the membrane proton channel. F(1) has five subunits: alpha(3), beta(3), gamma(1), delta(1), epsilon(1). F(0) has three main subunits: a(1), b(2) and c(10-14). The alpha and beta chains form an alternating ring which encloses part of the gamma chain. F(1) is attached to F(0) by a central stalk formed by the gamma and epsilon chains, while a peripheral stalk is formed by the delta and b chains.

It localises to the cell inner membrane. F(1)F(0) ATP synthase produces ATP from ADP in the presence of a proton or sodium gradient. F-type ATPases consist of two structural domains, F(1) containing the extramembraneous catalytic core and F(0) containing the membrane proton channel, linked together by a central stalk and a peripheral stalk. During catalysis, ATP synthesis in the catalytic domain of F(1) is coupled via a rotary mechanism of the central stalk subunits to proton translocation. In terms of biological role, this protein is part of the stalk that links CF(0) to CF(1). It either transmits conformational changes from CF(0) to CF(1) or is implicated in proton conduction. This chain is ATP synthase subunit delta, found in Hyphomonas neptunium (strain ATCC 15444).